A 58-amino-acid chain; its full sequence is Large ribosomal subunit protein bL32c (58 aa).

2 disordered regions span residues 1 to 21 and 34 to 58; these read MAVP…SQWM and LAGR…MQPN. Low complexity predominate over residues 44-58; that stretch reads QMQPTQMQPTQMQPN.

It belongs to the bacterial ribosomal protein bL32 family.

It localises to the plastid. Its subcellular location is the chloroplast. This is Large ribosomal subunit protein bL32c from Cyanidioschyzon merolae (strain NIES-3377 / 10D) (Unicellular red alga).